We begin with the raw amino-acid sequence, 286 residues long: Oxidoreductase clz15 (286 aa).

The protein belongs to the asaB hydroxylase/desaturase family.

The protein operates within secondary metabolite biosynthesis. Its function is as follows. Oxidoreductase; part of the gene cluster that mediates the biosynthesis of squalestatin S1 (SQS1, also known as zaragozic acid A), a heavily oxidized fungal polyketide that offers potent cholesterol lowering activity by targeting squalene synthase (SS). SQS1 is composed of a 2,8-dioxobicyclic[3.2.1]octane-3,4,5-tricarboxyclic acid core that is connected to two lipophilic polyketide arms. These initial steps feature the priming of an unusual benzoic acid starter unit onto the highly reducing polyketide synthase clz14, followed by oxaloacetate extension and product release to generate a tricarboxylic acid containing product. The phenylalanine ammonia lyase (PAL) clz10 and the acyl-CoA ligase clz12 are involved in transforming phenylalanine into benzoyl-CoA. The citrate synthase-like protein clz17 is involved in connecting the C-alpha-carbons of the hexaketide chain and oxaloacetate to afford the tricarboxylic acid unit. The potential hydrolytic enzymes, clz11 and clz13, are in close proximity to pks2 and may participate in product release. On the other side, the tetraketide arm is synthesized by a the squalestatin tetraketide synthase clz2 and enzymatically esterified to the core in the last biosynthetic step, by the acetyltransferase clz6. The biosynthesis of the tetraketide must involve 3 rounds of chain extension. After the first and second rounds methyl-transfer occurs, and in all rounds of extension the ketoreductase and dehydratase are active. The enoyl reductase and C-MeT of clz2 are not active in the final round of extension. The acetyltransferase clz6 appears to have a broad substrate selectivity for its acyl CoA substrate, allowing the in vitro synthesis of novel squalestatins. The biosynthesis of SQS1 requires several oxidative steps likely performed by oxidoreductases clz3, clz15 and clz16. Finally, in support of the identification of the cluster as being responsible for SQS1 production, the cluster contains a gene encoding a putative squalene synthase (SS) clz20, suggesting a likely mechanism for self-resistance. The polypeptide is Oxidoreductase clz15 (Cochliobolus lunatus (Filamentous fungus)).